Here is a 216-residue protein sequence, read N- to C-terminus: Large ribosomal subunit protein uL1A (216 aa).

2 positions are modified to phosphoserine: Ser85 and Ser128.

It belongs to the universal ribosomal protein uL1 family. In terms of assembly, component of the large ribosomal subunit (LSU). Mature yeast ribosomes consist of a small (40S) and a large (60S) subunit. The 40S small subunit contains 1 molecule of ribosomal RNA (18S rRNA) and at least 33 different proteins. The large 60S subunit contains 3 rRNA molecules (25S, 5.8S and 5S rRNA) and at least 46 different proteins. uL1 forms part of the L1 stalk.

The protein resides in the cytoplasm. Component of the ribosome, a large ribonucleoprotein complex responsible for the synthesis of proteins in the cell. The small ribosomal subunit (SSU) binds messenger RNAs (mRNAs) and translates the encoded message by selecting cognate aminoacyl-transfer RNA (tRNA) molecules. The large subunit (LSU) contains the ribosomal catalytic site termed the peptidyl transferase center (PTC), which catalyzes the formation of peptide bonds, thereby polymerizing the amino acids delivered by tRNAs into a polypeptide chain. The nascent polypeptides leave the ribosome through a tunnel in the LSU and interact with protein factors that function in enzymatic processing, targeting, and the membrane insertion of nascent chains at the exit of the ribosomal tunnel. uL1 forms part of the L1 stalk, a mobile element that plays a role in evacuating the exit-site tRNA. The protein is Large ribosomal subunit protein uL1A (rpl102) of Schizosaccharomyces pombe (strain 972 / ATCC 24843) (Fission yeast).